Here is a 329-residue protein sequence, read N- to C-terminus: Phenylalanine--tRNA ligase alpha subunit (329 aa).

Glu246 is a Mg(2+) binding site.

It belongs to the class-II aminoacyl-tRNA synthetase family. Phe-tRNA synthetase alpha subunit type 1 subfamily. In terms of assembly, tetramer of two alpha and two beta subunits. Mg(2+) serves as cofactor.

It is found in the cytoplasm. It catalyses the reaction tRNA(Phe) + L-phenylalanine + ATP = L-phenylalanyl-tRNA(Phe) + AMP + diphosphate + H(+). This is Phenylalanine--tRNA ligase alpha subunit from Helicobacter hepaticus (strain ATCC 51449 / 3B1).